Here is a 309-residue protein sequence, read N- to C-terminus: Anamorsin (309 aa).

Residues 6–172 (ISPGQLVAVF…KPNFEVGSSS (167 aa)) form an N-terminal SAM-like domain region. Residues 173-222 (QLKLLHKKSSSVKPVVDPATAKLWTLSANDMEDDSMDLIDSDELLDPEDL) form a linker region. Phosphoserine occurs at positions 182, 183, and 213. [2Fe-2S] cluster-binding residues include C235, C244, C247, and C249. The segment at 235–249 (CGEGKKRKACKNCTC) is fe-S binding site A. At S269 the chain carries Phosphoserine. [4Fe-4S] cluster-binding residues include C271, C274, C282, and C285. Short sequence motifs (cx2C motif) lie at residues 271–274 (CGNC) and 282–285 (CANC). Residues 271–285 (CGNCYLGDAFRCANC) are fe-S binding site B. Phosphoserine is present on residues S302 and S304.

This sequence belongs to the anamorsin family. As to quaternary structure, monomer. Interacts with NDOR1. Interacts with CHCHD4. Requires [2Fe-2S] cluster as cofactor. [4Fe-4S] cluster is required as a cofactor.

The protein resides in the cytoplasm. The protein localises to the nucleus. It localises to the mitochondrion intermembrane space. Functionally, component of the cytosolic iron-sulfur (Fe-S) protein assembly (CIA) machinery required for the maturation of extramitochondrial Fe-S proteins. Part of an electron transfer chain functioning in an early step of cytosolic Fe-S biogenesis, facilitating the de novo assembly of a [4Fe-4S] cluster on the scaffold complex NUBP1-NUBP2. Electrons are transferred to CIAPIN1 from NADPH via the FAD- and FMN-containing protein NDOR1. NDOR1-CIAPIN1 are also required for the assembly of the diferric tyrosyl radical cofactor of ribonucleotide reductase (RNR), probably by providing electrons for reduction during radical cofactor maturation in the catalytic small subunit. Has anti-apoptotic effects in the cell. Involved in negative control of cell death upon cytokine withdrawal. Promotes development of hematopoietic cells. The chain is Anamorsin from Rattus norvegicus (Rat).